We begin with the raw amino-acid sequence, 248 residues long: Myelin protein P0 (248 aa).

Residues 1–29 (MAPGAPSSSPSPILAALLFSSLVLSPAQA) form the signal peptide. Positions 30-143 (IVVYTDKEVY…DIVGKTSQVT (114 aa)) constitute an Ig-like V-type domain. Residues 30–153 (IVVYTDKEVY…LYVFEKVPTR (124 aa)) lie on the Extracellular side of the membrane. Residues C50 and C127 are joined by a disulfide bond. Residue N122 is glycosylated (N-linked (GlcNAc...) (complex) asparagine). A helical transmembrane segment spans residues 154-179 (YGVVLGAVIGGVLGVVLLVLLLFYVV). The Cytoplasmic segment spans residues 180-248 (RYCWLRRQAA…GLGESRKDKK (69 aa)). Phosphoserine; by PKC is present on S210. The segment at 222 to 248 (MLDHSRSTKAASEKKAKGLGESRKDKK) is disordered. Over residues 224–248 (DHSRSTKAASEKKAKGLGESRKDKK) the composition is skewed to basic and acidic residues. A phosphoserine mark is found at S226 and S228. S233 and S243 each carry phosphoserine; by PKC.

The protein belongs to the myelin P0 protein family. In terms of assembly, homodimer and homotetramer. Post-translationally, N-glycosylated; contains sulfate-substituted glycan.

It localises to the cell membrane. Its function is as follows. Is an adhesion molecule necessary for normal myelination in the peripheral nervous system. It mediates adhesion between adjacent myelin wraps and ultimately drives myelin compaction. In Equus caballus (Horse), this protein is Myelin protein P0 (MPZ).